Consider the following 308-residue polypeptide: Autophagy-related protein 3 (308 aa).

Residues 83–159 (NFVETQTTET…NELADDDDDI (77 aa)) form a flexible region region. The disordered stretch occupies residues 89–121 (TTETRDVGDGWELEGQSEGERESGREDTKSNEE). The segment covering 106–120 (EGERESGREDTKSNE) has biased composition (basic and acidic residues). Cysteine 235 (glycyl thioester intermediate) is an active-site residue. The tract at residues 239–283 (NVMKVLMEKVRASRHRARDTEAQKNAEEDWEDLQSDIDDGLRVDQ) is handle region.

It belongs to the ATG3 family. Monomer. Interacts with ATG8 through an intermediate thioester bond between Cys-235 and the C-terminal Gly of ATG8. Interacts with the C-terminal region of the E1-like ATG7 enzyme. Also interacts with the ATG12-ATG5 conjugate.

The protein localises to the cytoplasm. Functionally, E2 conjugating enzyme required for the cytoplasm to vacuole transport (Cvt) and autophagy. Required for selective autophagic degradation of the nucleus (nucleophagy) as well as for mitophagy which contributes to regulate mitochondrial quantity and quality by eliminating the mitochondria to a basal level to fulfill cellular energy requirements and preventing excess ROS production. Responsible for the E2-like covalent binding of phosphatidylethanolamine to the C-terminal Gly of ATG8. The ATG12-ATG5 conjugate plays a role of an E3 and promotes the transfer of ATG8 from ATG3 to phosphatidylethanolamine (PE). This step is required for the membrane association of ATG8. The formation of the ATG8-phosphatidylethanolamine conjugate is essential for autophagy and for the cytoplasm to vacuole transport (Cvt). The ATG8-PE conjugate mediates tethering between adjacent membranes and stimulates membrane hemifusion, leading to expansion of the autophagosomal membrane during autophagy. In Kluyveromyces marxianus (strain DMKU3-1042 / BCC 29191 / NBRC 104275) (Yeast), this protein is Autophagy-related protein 3.